We begin with the raw amino-acid sequence, 396 residues long: 1-deoxy-D-xylulose 5-phosphate reductoisomerase (396 aa).

6 residues coordinate NADPH: T10, G11, S12, I13, Q38, and N124. K125 provides a ligand contact to 1-deoxy-D-xylulose 5-phosphate. E126 contributes to the NADPH binding site. Mn(2+) is bound at residue D150. 1-deoxy-D-xylulose 5-phosphate-binding residues include S151, E152, S179, and H202. Mn(2+) is bound at residue E152. Residue G208 coordinates NADPH. The 1-deoxy-D-xylulose 5-phosphate site is built by S215, N220, K221, and E224. E224 provides a ligand contact to Mn(2+).

Belongs to the DXR family. It depends on Mg(2+) as a cofactor. Mn(2+) is required as a cofactor.

The enzyme catalyses 2-C-methyl-D-erythritol 4-phosphate + NADP(+) = 1-deoxy-D-xylulose 5-phosphate + NADPH + H(+). It participates in isoprenoid biosynthesis; isopentenyl diphosphate biosynthesis via DXP pathway; isopentenyl diphosphate from 1-deoxy-D-xylulose 5-phosphate: step 1/6. Functionally, catalyzes the NADPH-dependent rearrangement and reduction of 1-deoxy-D-xylulose-5-phosphate (DXP) to 2-C-methyl-D-erythritol 4-phosphate (MEP). This Ralstonia pickettii (strain 12J) protein is 1-deoxy-D-xylulose 5-phosphate reductoisomerase.